We begin with the raw amino-acid sequence, 372 residues long: NAD(P)H-quinone oxidoreductase subunit 1 (372 aa).

9 consecutive transmembrane segments (helical) span residues 27–47 (AIWM…GVLV), 65–85 (PEYI…KLVF), 97–117 (WLFT…YLIV), 128–148 (VGTG…GLLM), 166–186 (AAQS…IVMM), 204–224 (ILGW…IAAL), 266–286 (ILSA…PIPI), 308–328 (ALGI…AILL), and 347–367 (FLLP…LAFP).

This sequence belongs to the complex I subunit 1 family. NDH-1 is composed of at least 11 different subunits.

The protein resides in the cellular thylakoid membrane. The catalysed reaction is a plastoquinone + NADH + (n+1) H(+)(in) = a plastoquinol + NAD(+) + n H(+)(out). It catalyses the reaction a plastoquinone + NADPH + (n+1) H(+)(in) = a plastoquinol + NADP(+) + n H(+)(out). NDH-1 shuttles electrons from an unknown electron donor, via FMN and iron-sulfur (Fe-S) centers, to quinones in the respiratory and/or the photosynthetic chain. The immediate electron acceptor for the enzyme in this species is believed to be plastoquinone. Couples the redox reaction to proton translocation, and thus conserves the redox energy in a proton gradient. The chain is NAD(P)H-quinone oxidoreductase subunit 1 from Nostoc sp. (strain PCC 7120 / SAG 25.82 / UTEX 2576).